Consider the following 178-residue polypeptide: ATP-dependent protease subunit HslV (178 aa).

Residue T7 is part of the active site. Na(+) is bound by residues G162, C165, and T168.

Belongs to the peptidase T1B family. HslV subfamily. A double ring-shaped homohexamer of HslV is capped on each side by a ring-shaped HslU homohexamer. The assembly of the HslU/HslV complex is dependent on binding of ATP.

The protein localises to the cytoplasm. The enzyme catalyses ATP-dependent cleavage of peptide bonds with broad specificity.. Allosterically activated by HslU binding. In terms of biological role, protease subunit of a proteasome-like degradation complex believed to be a general protein degrading machinery. The chain is ATP-dependent protease subunit HslV from Cupriavidus necator (strain ATCC 17699 / DSM 428 / KCTC 22496 / NCIMB 10442 / H16 / Stanier 337) (Ralstonia eutropha).